Consider the following 299-residue polypeptide: Taste receptor type 2 member 1 (299 aa).

Residues 1–9 (MLESHLIIY) are Extracellular-facing. The helical transmembrane segment at 10 to 30 (FLLAVIQFLLGTFTNGIIVVV) threads the bilayer. Residues 31 to 55 (NGIDLIKHRKMAPLDLLLSCLAVSR) lie on the Cytoplasmic side of the membrane. Residues 56 to 76 (IFLQLFIFYINVVVIFLIEFI) traverse the membrane as a helical segment. Residues 77–81 (TCSAS) lie on the Extracellular side of the membrane. The helical transmembrane segment at 82 to 102 (CAFLVFVNELELWLATWLGVF) threads the bilayer. Residues 103–124 (YCAKVASVLHPLFIWLKMRISK) lie on the Cytoplasmic side of the membrane. A helical transmembrane segment spans residues 125-145 (SVPWMILGSLLYVSMICIFHI). At 146 to 178 (KYTGFMVPYFLRNLFFQNATIQTEVKQAIQIFS) the chain is on the extracellular side. An N-linked (GlcNAc...) asparagine glycan is attached at asparagine 163. Residues 179–199 (FVAELLVPLLIFLVAVLLLIF) form a helical membrane-spanning segment. Residues 200–222 (SLGRHTRQMRNTVAGSRVPGRGA) are Cytoplasmic-facing. The chain crosses the membrane as a helical span at residues 223–243 (HISALLSILSFLILYISHYLI). The Extracellular segment spans residues 244-257 (KTFLSSLKFHVKRF). Residues 258 to 278 (VFLFCILVIGTYPSGHSLILI) form a helical membrane-spanning segment. Residues 279–299 (LGNPKLKQNTKKFLCHSKCCQ) lie on the Cytoplasmic side of the membrane.

The protein belongs to the G-protein coupled receptor T2R family.

The protein localises to the membrane. Receptor that may play a role in the perception of bitterness and is gustducin-linked. May play a role in sensing the chemical composition of the gastrointestinal content. The activity of this receptor may stimulate alpha gustducin, mediate PLC-beta-2 activation and lead to the gating of TRPM5. The polypeptide is Taste receptor type 2 member 1 (TAS2R1) (Chlorocebus aethiops (Green monkey)).